The primary structure comprises 233 residues: Orotidine 5'-phosphate decarboxylase (233 aa).

Substrate contacts are provided by residues Asp-12, Lys-34, 61–70 (DLKFHDIPNT), Thr-120, Arg-181, Gln-190, Gly-210, and Arg-211. Lys-63 serves as the catalytic Proton donor.

Belongs to the OMP decarboxylase family. Type 1 subfamily. As to quaternary structure, homodimer.

The catalysed reaction is orotidine 5'-phosphate + H(+) = UMP + CO2. It participates in pyrimidine metabolism; UMP biosynthesis via de novo pathway; UMP from orotate: step 2/2. Catalyzes the decarboxylation of orotidine 5'-monophosphate (OMP) to uridine 5'-monophosphate (UMP). The polypeptide is Orotidine 5'-phosphate decarboxylase (Hahella chejuensis (strain KCTC 2396)).